A 485-amino-acid polypeptide reads, in one-letter code: Elongation factor TuB, chloroplastic (485 aa).

The transit peptide at 1-76 directs the protein to the chloroplast; it reads MASISAASAT…TTHPRRFTVR (76 aa). The tr-type G domain maps to 86-290; the sequence is KPHVNIGTIG…NVDEYIPIPQ (205 aa). The segment at 95-102 is G1; that stretch reads GHVDHGKT. 95–102 is a binding site for GTP; sequence GHVDHGKT. A G2 region spans residues 136-140; the sequence is GITIN. The interval 157-160 is G3; that stretch reads DCPG. GTP-binding positions include 157–161 and 212–215; these read DCPGH and NKQD. Positions 212 to 215 are G4; it reads NKQD. The G5 stretch occupies residues 250 to 252; it reads SAL.

Belongs to the TRAFAC class translation factor GTPase superfamily. Classic translation factor GTPase family. EF-Tu/EF-1A subfamily.

It is found in the plastid. The protein resides in the chloroplast. Functionally, this protein promotes the GTP-dependent binding of aminoacyl-tRNA to the A-site of ribosomes during protein biosynthesis. This Nicotiana sylvestris (Wood tobacco) protein is Elongation factor TuB, chloroplastic (TUFB).